Here is a 330-residue protein sequence, read N- to C-terminus: Putative aminohydrolase AF_1775 (330 aa).

Zn(2+)-binding residues include H54, H56, H181, and D253.

It belongs to the metallo-dependent hydrolases superfamily. ATZ/TRZ family.

The protein is Putative aminohydrolase AF_1775 of Archaeoglobus fulgidus (strain ATCC 49558 / DSM 4304 / JCM 9628 / NBRC 100126 / VC-16).